We begin with the raw amino-acid sequence, 341 residues long: LIM and senescent cell antigen-like-containing domain protein 2 (341 aa).

5 LIM zinc-binding domains span residues 13-74 (AMCQ…LFAP), 76-133 (CGFC…EKAK), 138-195 (FICQ…KMGI), 196-255 (PICG…LFGD), and 256-315 (VCYN…FPLE). Residue S328 is modified to Phosphoserine.

As to quaternary structure, interacts with integrin-linked protein kinase 1 (ILK) via the first LIM domain, and in competition with LIMS1. Part of the heterotrimeric IPP complex composed of integrin-linked kinase (ILK), LIMS1 or LIMS2, and PARVA. Interacts with TGFB1I1. Detected in heart, lung, kidney, liver, urinary bladder, fat, skin, skeletal muscle, uterus, large intestine and testis.

The protein localises to the cell junction. Its subcellular location is the focal adhesion. It is found in the cell membrane. Adapter protein in a cytoplasmic complex linking beta-integrins to the actin cytoskeleton, bridges the complex to cell surface receptor tyrosine kinases and growth factor receptors. The polypeptide is LIM and senescent cell antigen-like-containing domain protein 2 (Lims2) (Mus musculus (Mouse)).